The following is a 545-amino-acid chain: MPVDVGTLPPPAPREAVSAAAHLLASVDGDPWGRTSPTVYETARVHAWAPHLPGRDRRVTWLLDQQRAGGLWGDGPPAYQVLPTLAAVTALLAELDRHPEAGHSSLGGRLAAAVAAGLDTLHGLSHHDPLPDTAAVELLVPGLITEVNDRLDAIDPEAAHPALAPVPHGRRLTAVHGIPALPRHRLAERLARFARLPVKLHHCFEALAPVCPPGLVPARPDHLLGSSSAATAAWLATATAAPGAPGLDRLLRSTAARYGGLFPETARITVFERLWVLTTLHRAGLLATFEPLARRWVSALAAPGGVPGVPGFEPDADDTAVTLHLATELGVPYRPEVLDPFRTGDHFACYLGEDTGSVSTNAHVLLALGTWTRHHPDTADHGNTIRLLGRWLVERQHGDGHWDDKWHASPYYATAKVTAALSRHGGPEAADALRRAARWVRETRRTDGSWGIWGGTAEETAYAAQILLDAPEPPTDVLGCAHAHLTARADDDGPPPALWHDKTLFAPDAIVRAEVLSTLRRLDRRLPAPAPVPPGFDAARTGPAD.

Residues Asp315–Ala320 carry the DXDDTA motif motif. The RXXDGSW motif signature appears at Arg444 to Trp450. A disordered region spans residues Leu526–Asp545.

It belongs to the terpene synthase family. Mg(2+) is required as a cofactor.

The catalysed reaction is (2E,6E,10E)-geranylgeranyl diphosphate = (13E)-labda-7,13-dien-15-yl diphosphate. Its function is as follows. Involved in the biosynthesis of the labdane-type bicyclic diterpene labda-7,13(16),14-triene. Catalyzes the conversion of geranylgeranyl diphosphate (GGDP) into labda-7,13(E)-dienyl diphosphate. The polypeptide is Labda-7,13-dienyl diphosphate synthase (Streptomyces clavuligerus).